Consider the following 150-residue polypeptide: HTH-type transcriptional regulator LrpA (150 aa).

An HTH asnC-type domain is found at 5–66 (LDDIDRILVR…RINPEAVGHL (62 aa)). A DNA-binding region (H-T-H motif) is located at residues 24–43 (LSELATRAGLSVSAVQSRVR). L-phenylalanine contacts are provided by valine 100, glycine 102, and glutamate 104.

In terms of assembly, homohexadecamer in the absence of any added ligand. Homooctamer. Tetramer of dimers. In the presence of phenylalanine, the hexadecamer dissociates into an octamer, which further dissociates partially into lower-order oligomers.

With respect to regulation, the DNA-binding activity of LrpA is modulated by interaction of LrpA with various effector molecules, including amino acids and vitamins. The DNA binding affinity is decreased by several amino acids, including phenylalanine, tyrosine, tryptophan, histidine, leucine and aspartate. Preferentially binds to aromatic amino acids. Besides amino acids, the binding affinity is also reduced by vitamins, including B1, B3, B6, VC, B7, B9, B12, VA and VK3. Transcriptional regulator that probably plays an important role in M.tuberculosis persistence. Regulates the expression of several genes, including lat, rsmG, whiB2, lsr2 and Rv2011c. Acts by binding directly to the promoter region of the target genes. This Mycobacterium tuberculosis (strain ATCC 25618 / H37Rv) protein is HTH-type transcriptional regulator LrpA.